Reading from the N-terminus, the 751-residue chain is MDRILTKEEKQALISLLDLEPQYWGDYGRMQKCYKKKCLQLHPDKGGNEELMQQLNTLWTKLKDGLYRVRLLLGPSQDPNASTSTSRPGEFYNPDTGGYWSYSYGSAGYSDQQKKYWEEFFSKWDVNEDLTCQEELSSSEDEFTPWHPNPPPSPVSISSDSSSSSCDEEYPRNSSRKRKRVHANGSPNTPIQPNKRAHTPGGGRTTIRGDTDIPRTPARESQSTFGSYFNSTEELEEEISQTQQSHHNTTPKKPPPTVSPDDFPTILRGFLSHAIFSNKTQNAFIIYSTKEKCEVLYEQIDKYNPDYKGIFIMKQTEAFVMFMTPGKHRVAAVKSYCCKFCTVSFLLCKAVTKPLELYNCVAKCDDFQILKENKPGLYHFEFCDEKKEVKQIDWNFLTSFAVENELDDPLVIMGHYLEFSQCESSCKKCAEALPRMKVHWANHSQHLENAELFLHCKQQKSICQQAADNVLARRRLKVLESTRQELLAERLNKLLDQLKDLSPVDKHLYLAGVAWYQCMFPDFEMMLLDILKLFTENVPKKRNVLFRGPVNSGKTSLAAAIMNLVGGVALNVNCPADKLNFELGVAIDKFAVVFEDVKGQTGDKRHLQSGLGINNLDNLRDYLDGSVKVNLEKKHVNKRSQIFPPCIVTANEYFFPQTLYARFHKVYNFEVKDFLAKSLEENSYMGRHRVCQSPLTMLIALLWNVPTENFDKSLKEKVETEKKVLSDMCNFTTFAEMCLNIQRGADPLEAL.

Met1 carries the N-acetylmethionine; by host modification. The 64-residue stretch at 12 to 75 folds into the J domain; sequence ALISLLDLEP…LYRVRLLLGP (64 aa). Residues 130–134 form a binding to host RB1 protein and transforming activity region; it reads LTCQE. A compositionally biased stretch (acidic residues) spans 133-143; sequence QEELSSSEDEF. A disordered region spans residues 133–260; it reads QEELSSSEDE…PKKPPPTVSP (128 aa). Over residues 155 to 165 the composition is skewed to low complexity; it reads VSISSDSSSSS. The segment covering 219–232 has biased composition (polar residues); it reads RESQSTFGSYFNST. Position 245 is a phosphoserine; by host (Ser245). Thr249 carries the phosphothreonine; by host modification. Residues 251–257 carry the Nuclear localization signal motif; that stretch reads PKKPPPT. Positions 264-380 form a DNA-binding region, T-ag OBD; the sequence is PTILRGFLSH…KENKPGLYHF (117 aa). Residues 389 to 483 form a T-ag D1-type zinc finger; that stretch reads VKQIDWNFLT…RRLKVLESTR (95 aa). Zn(2+) contacts are provided by Cys426, Cys429, His439, and His443. Positions 522–682 constitute an SF3 helicase domain; sequence DFEMMLLDIL…DFLAKSLEEN (161 aa). 548–555 is an ATP binding site; the sequence is GPVNSGKT.

Forms homohexamers in the presence of ATP. Interacts with host HDAC1. Interacts (via LXCXE domain) with host RB1; the interaction induces the aberrant dissociation of RB1-E2F1 complex thereby disrupting RB1's activity. Interacts (via LXCXE domain) with host pRB-related proteins RBL1 and RBL2. Interacts (via C-terminus) with host TOP1 and POLA1 allowing DNA replication. Interacts with host preinitiation complex components TBP, TFIIA and TFIID to regulate transcription initiation. It depends on Mg(2+) as a cofactor. Phosphorylated on both serine and threonine residues. Small t antigen inhibits the dephosphorylation by the AC form of PP2A. In terms of processing, O-Glycosylated near the C-terminal region. Post-translationally, acetylated by CBP in a TP53-dependent manner.

Its subcellular location is the host nucleus. It catalyses the reaction Couples ATP hydrolysis with the unwinding of duplex DNA by translocating in the 3'-5' direction.. The enzyme catalyses ATP + H2O = ADP + phosphate + H(+). Functionally, isoform large T antigen is a key early protein essential for both driving viral replication and inducing cellular transformation. Plays a role in viral genome replication by driving entry of quiescent cells into the cell cycle and by autoregulating the synthesis of viral early mRNA. Displays highly oncogenic activities by corrupting the host cellular checkpoint mechanisms that guard cell division and the transcription, replication, and repair of DNA. Participates in the modulation of cellular gene expression preceeding viral DNA replication. This step involves binding to host key cell cycle regulators retinoblastoma protein RB1/pRb and TP53. Induces the disassembly of host E2F1 transcription factors from RB1, thus promoting transcriptional activation of E2F1-regulated S-phase genes. Inhibits host TP53 binding to DNA, abrogating the ability of TP53 to stimulate gene expression. Plays the role of a TFIID-associated factor (TAF) in transcription initiation for all three RNA polymerases, by stabilizing the TBP-TFIIA complex on promoters. Initiates viral DNA replication and unwinding via interactions with the viral origin of replication. Binds two adjacent sites in the SV40 origin. The replication fork movement is facilitated by Large T antigen helicase activity. Has processive 3'-5' DNA helicase activity which requires a short 3' single-stranded region and ATP. Activates the transcription of viral late mRNA, through host TBP and TFIIA stabilization. Interferes with histone deacetylation mediated by HDAC1, leading to activation of transcription. The sequence is that of Large T antigen from Mesocricetus auratus (Golden hamster).